Reading from the N-terminus, the 528-residue chain is ATP synthase subunit alpha 1 (528 aa).

169 to 176 is a binding site for ATP; sequence GDRQTGKT.

It belongs to the ATPase alpha/beta chains family. In terms of assembly, F-type ATPases have 2 components, CF(1) - the catalytic core - and CF(0) - the membrane proton channel. CF(1) has five subunits: alpha(3), beta(3), gamma(1), delta(1), epsilon(1). CF(0) has three main subunits: a(1), b(2) and c(9-12). The alpha and beta chains form an alternating ring which encloses part of the gamma chain. CF(1) is attached to CF(0) by a central stalk formed by the gamma and epsilon chains, while a peripheral stalk is formed by the delta and b chains.

It localises to the cell membrane. The enzyme catalyses ATP + H2O + 4 H(+)(in) = ADP + phosphate + 5 H(+)(out). Produces ATP from ADP in the presence of a proton gradient across the membrane. The alpha chain is a regulatory subunit. This Mycoplasmopsis pulmonis (strain UAB CTIP) (Mycoplasma pulmonis) protein is ATP synthase subunit alpha 1.